The chain runs to 184 residues: mRNA transport regulator MTR2 (184 aa).

The tract at residues Lys-111–Asn-135 is disordered. The segment covering Ile-120 to Asn-129 has biased composition (polar residues). Thr-125 is subject to Phosphothreonine.

As to quaternary structure, interacts with MEX67.

The protein localises to the nucleus. Affects mRNA transport from the nucleus to the cytoplasm. This is mRNA transport regulator MTR2 (MTR2) from Saccharomyces cerevisiae (strain ATCC 204508 / S288c) (Baker's yeast).